The primary structure comprises 338 residues: Fructose-1,6-bisphosphatase class 1 (338 aa).

Mg(2+) contacts are provided by E90, D112, L114, and D115. Substrate contacts are provided by residues 115 to 118, N207, and K273; that span reads DGSS. E279 provides a ligand contact to Mg(2+).

The protein belongs to the FBPase class 1 family. In terms of assembly, homotetramer. It depends on Mg(2+) as a cofactor.

It is found in the cytoplasm. It carries out the reaction beta-D-fructose 1,6-bisphosphate + H2O = beta-D-fructose 6-phosphate + phosphate. It functions in the pathway carbohydrate biosynthesis; gluconeogenesis. This is Fructose-1,6-bisphosphatase class 1 from Stenotrophomonas maltophilia (strain R551-3).